We begin with the raw amino-acid sequence, 236 residues long: 1-(5-phosphoribosyl)-5-[(5-phosphoribosylamino)methylideneamino] imidazole-4-carboxamide isomerase (236 aa).

Asp8 serves as the catalytic Proton acceptor. Residue Asp127 is the Proton donor of the active site.

The protein belongs to the HisA/HisF family.

The protein resides in the cytoplasm. It carries out the reaction 1-(5-phospho-beta-D-ribosyl)-5-[(5-phospho-beta-D-ribosylamino)methylideneamino]imidazole-4-carboxamide = 5-[(5-phospho-1-deoxy-D-ribulos-1-ylimino)methylamino]-1-(5-phospho-beta-D-ribosyl)imidazole-4-carboxamide. Its pathway is amino-acid biosynthesis; L-histidine biosynthesis; L-histidine from 5-phospho-alpha-D-ribose 1-diphosphate: step 4/9. The sequence is that of 1-(5-phosphoribosyl)-5-[(5-phosphoribosylamino)methylideneamino] imidazole-4-carboxamide isomerase from Campylobacter fetus subsp. fetus (strain 82-40).